The primary structure comprises 51 residues: uncharacterized protein (51 aa).

The helical transmembrane segment at 20–42 (NFFSRMWNAVVFGFGAAIGASVA) threads the bilayer.

Its subcellular location is the membrane. This is an uncharacterized protein from Schizosaccharomyces pombe (strain 972 / ATCC 24843) (Fission yeast).